We begin with the raw amino-acid sequence, 314 residues long: Oxidoreductase NAD-binding domain-containing protein 1 (314 aa).

The signal sequence occupies residues 1–18 (MALVAGSAAYQVLRGVTG). The FAD-binding FR-type domain occupies 63–166 (EIISPAKVCG…VGGEFCFDPQ (104 aa)). Residue 180 to 185 (GVGINP) participates in NAD(+) binding.

In Xenopus laevis (African clawed frog), this protein is Oxidoreductase NAD-binding domain-containing protein 1 (oxnad1).